The following is a 190-amino-acid chain: Potassium-transporting ATPase KdpC subunit (190 aa).

The chain crosses the membrane as a helical span at residues threonine 10–glycine 30.

Belongs to the KdpC family. In terms of assembly, the system is composed of three essential subunits: KdpA, KdpB and KdpC.

The protein resides in the cell inner membrane. Its function is as follows. Part of the high-affinity ATP-driven potassium transport (or Kdp) system, which catalyzes the hydrolysis of ATP coupled with the electrogenic transport of potassium into the cytoplasm. This subunit acts as a catalytic chaperone that increases the ATP-binding affinity of the ATP-hydrolyzing subunit KdpB by the formation of a transient KdpB/KdpC/ATP ternary complex. The chain is Potassium-transporting ATPase KdpC subunit from Escherichia coli (strain K12 / MC4100 / BW2952).